A 115-amino-acid chain; its full sequence is Large ribosomal subunit protein bL19 (115 aa).

The protein belongs to the bacterial ribosomal protein bL19 family.

Its function is as follows. This protein is located at the 30S-50S ribosomal subunit interface and may play a role in the structure and function of the aminoacyl-tRNA binding site. In Streptococcus thermophilus (strain CNRZ 1066), this protein is Large ribosomal subunit protein bL19.